Consider the following 982-residue polypeptide: E3 ubiquitin-protein ligase CBL-B (982 aa).

Positions methionine 1–serine 14 are enriched in low complexity. Residues methionine 1–serine 25 are disordered. Residues proline 46–glutamine 178 are 4H. Residues proline 46–aspartate 354 form the Cbl-PTB domain. Residues glycine 179 to phenylalanine 251 are EF-hand-like. The Ca(2+) site is built by aspartate 232, threonine 234, asparagine 236, tyrosine 238, and glutamate 243. The segment at glutamine 252 to aspartate 354 is SH2-like. Arginine 297 lines the 4-O-phospho-L-tyrosine pocket. A linker region spans residues leucine 355–leucine 383. The RING-type zinc finger occupies cysteine 384 to arginine 423. 3 disordered regions span residues methionine 480–arginine 582, valine 709–valine 728, and leucine 766–arginine 911. A compositionally biased stretch (polar residues) spans arginine 483–serine 497. A compositionally biased stretch (pro residues) spans leucine 554 to proline 576. A compositionally biased stretch (pro residues) spans proline 825 to alanine 834. Residues serine 927–phenylalanine 970 enclose the UBA domain.

In terms of assembly, interacts with several SH3 domain-containing proteins and with poly-ubiquitinated proteins.

Its subcellular location is the cytoplasm. The enzyme catalyses S-ubiquitinyl-[E2 ubiquitin-conjugating enzyme]-L-cysteine + [acceptor protein]-L-lysine = [E2 ubiquitin-conjugating enzyme]-L-cysteine + N(6)-ubiquitinyl-[acceptor protein]-L-lysine.. It participates in protein modification; protein ubiquitination. E3 ubiquitin-protein ligase which accepts ubiquitin from specific E2 ubiquitin-conjugating enzymes, and transfers it to substrates, generally promoting their degradation by the proteasome. The chain is E3 ubiquitin-protein ligase CBL-B (cblb) from Xenopus tropicalis (Western clawed frog).